A 394-amino-acid chain; its full sequence is Benzoate membrane transport protein (394 aa).

Transmembrane regions (helical) follow at residues 16–36 (ATIA…IIFF), 49–69 (MISW…FLSI), 74–94 (PVVT…FPNI), 99–119 (AVAA…TGYF), 139–161 (LFQF…FSML), 176–196 (MLWV…MNPV), 220–240 (LALP…MAIL), 252–272 (IIAA…ITIV), 301–321 (GLFY…FSLL), 325–345 (LVAA…IKIA), and 368–388 (FLGL…YFIL).

The protein resides in the cell membrane. Functionally, probably involved in the transport of benzoate. In Acinetobacter baylyi (strain ATCC 33305 / BD413 / ADP1), this protein is Benzoate membrane transport protein (benE).